The following is a 106-amino-acid chain: ATP-dependent Clp protease adapter protein ClpS (106 aa).

A disordered region spans residues 1–20; the sequence is MKVDMSTSVKDDAQLEASRV.

Belongs to the ClpS family. Binds to the N-terminal domain of the chaperone ClpA.

In terms of biological role, involved in the modulation of the specificity of the ClpAP-mediated ATP-dependent protein degradation. The protein is ATP-dependent Clp protease adapter protein ClpS of Chromobacterium violaceum (strain ATCC 12472 / DSM 30191 / JCM 1249 / CCUG 213 / NBRC 12614 / NCIMB 9131 / NCTC 9757 / MK).